Consider the following 264-residue polypeptide: MFEARLIQGSNLKKVQEALKDIVTEASWDCTSSGISLQAMDSSHVSLVQLTLRADGFENFRCDRNLAMGINMTSMAKIMKCAGNDDIITLRAEDNADMLELIFESSKGDKYSQYEMKLMDLDCEQLGIPEQDYSCCVTLPSQEFGRICRDLSQIGECVVITCTKDGVQFSAKGDLGAGKIKLKQNTGSDIKEEEQVTVEISEPVQLTFAIKYLNLFAKASPLSPSVCLSMSNNVPLVVEYKVADMGHIKYFLAPKIEDEEEQDS.

The DNA-binding element occupies arginine 61–lysine 80.

The protein belongs to the PCNA family. In terms of assembly, homotrimer. Forms a complex with activator 1 heteropentamer in the presence of ATP.

The protein resides in the nucleus. In terms of biological role, this protein is an auxiliary protein of DNA polymerase delta and is involved in the control of eukaryotic DNA replication by increasing the polymerase's processibility during elongation of the leading strand. The protein is Proliferating cell nuclear antigen (PCNA) of Styela clava (Sea squirt).